The primary structure comprises 529 residues: DEP domain-containing protein 1B (529 aa).

Residues 24 to 108 (FRAGMPLRKH…DDGHLYRFPP (85 aa)) form the DEP domain. The Rho-GAP domain occupies 192–393 (ARLQKVLGLD…FLMDNYQEIL (202 aa)).

The polypeptide is DEP domain-containing protein 1B (DEPDC1B) (Gallus gallus (Chicken)).